Here is a 448-residue protein sequence, read N- to C-terminus: Probable glucuronoxylan glucuronosyltransferase IRX7 (448 aa).

The Cytoplasmic segment spans residues 1 to 16 (MTTHKHRRTEKNLCFK). Residues 17–37 (QYYKWILCFILTLYFFASFFV) traverse the membrane as a helical; Signal-anchor for type II membrane protein segment. Residues 38-448 (DHDQDHRSST…RSVRRSNSFL (411 aa)) are Lumenal-facing. 5 N-linked (GlcNAc...) asparagine glycosylation sites follow: asparagine 157, asparagine 189, asparagine 287, asparagine 397, and asparagine 438.

This sequence belongs to the glycosyltransferase 47 family. In terms of tissue distribution, expressed in developing interfascicular fibers and xylem cells in stems and developing secondary xylem in roots.

The protein localises to the golgi apparatus membrane. Involved in the synthesis of the hemicellulose glucuronoxylan, a major component of secondary cell walls. Probably involved in the synthesis of the glycosyl sequence at the glucuronoxylan reducing end. The chain is Probable glucuronoxylan glucuronosyltransferase IRX7 (IRX7) from Arabidopsis thaliana (Mouse-ear cress).